A 74-amino-acid chain; its full sequence is Mu-Sparatoxin-Hp2 (74 aa).

Residues 1–20 form the signal peptide; it reads MKIIVLMMMLFAAFSAVVLA. The propeptide occupies 21–35; the sequence is DKSIEDAALDTVMDR. Intrachain disulfides connect cysteine 42-cysteine 57, cysteine 49-cysteine 62, and cysteine 56-cysteine 66. Leucine amide is present on leucine 73.

As to expression, expressed by the venom gland.

The protein localises to the secreted. In terms of biological role, weakly nhibits voltage-gated sodium channels Nav1.7/SCN9A. High concentration of the toxin (3 uM) inhibits Nav1.7/SCN9A currents by 80%. The protein is Mu-Sparatoxin-Hp2 of Heteropoda pingtungensis (Pingtung huntsman spider).